A 379-amino-acid chain; its full sequence is 8-amino-7-oxononanoate synthase (379 aa).

2 residues coordinate substrate: arginine 27 and arginine 34. 114 to 115 (GY) is a binding site for pyridoxal 5'-phosphate. Histidine 139 is a substrate binding site. Pyridoxal 5'-phosphate contacts are provided by residues serine 187, 212-215 (DDAH), and 232-235 (TLSK). The residue at position 235 (lysine 235) is an N6-(pyridoxal phosphate)lysine. Threonine 344 is a substrate binding site.

The protein belongs to the class-II pyridoxal-phosphate-dependent aminotransferase family. BioF subfamily. In terms of assembly, homodimer. Pyridoxal 5'-phosphate is required as a cofactor.

The enzyme catalyses 6-carboxyhexanoyl-[ACP] + L-alanine + H(+) = (8S)-8-amino-7-oxononanoate + holo-[ACP] + CO2. Its pathway is cofactor biosynthesis; biotin biosynthesis. Catalyzes the decarboxylative condensation of pimeloyl-[acyl-carrier protein] and L-alanine to produce 8-amino-7-oxononanoate (AON), [acyl-carrier protein], and carbon dioxide. The protein is 8-amino-7-oxononanoate synthase of Methylobacterium sp. (strain 4-46).